Reading from the N-terminus, the 196-residue chain is UMP-CMP kinase (196 aa).

An ATP-binding site is contributed by 13 to 18 (GAGKGT). Positions 33–63 (SAGDLLREERSRTDSEFGQLIDSYIKEGKIV) are NMP. Residues arginine 39, 61–63 (KIV), and 93–96 (GFPR) contribute to the a ribonucleoside 5'-phosphate site. Residue asparagine 100 coordinates CMP. An LID region spans residues 133 to 143 (ERGKSSGRTDD). Arginine 134 is an ATP binding site. Positions 140 and 151 each coordinate a ribonucleoside 5'-phosphate. Arginine 179 lines the ATP pocket.

The protein belongs to the adenylate kinase family. UMP-CMP kinase subfamily. As to quaternary structure, monomer. The cofactor is Mg(2+).

It is found in the nucleus. Its subcellular location is the cytoplasm. The enzyme catalyses CMP + ATP = CDP + ADP. The catalysed reaction is dCMP + ATP = dCDP + ADP. It carries out the reaction UMP + ATP = UDP + ADP. It catalyses the reaction a 2'-deoxyribonucleoside 5'-diphosphate + ATP = a 2'-deoxyribonucleoside 5'-triphosphate + ADP. The enzyme catalyses a ribonucleoside 5'-diphosphate + ATP = a ribonucleoside 5'-triphosphate + ADP. Functionally, catalyzes the phosphorylation of pyrimidine nucleoside monophosphates at the expense of ATP. Plays an important role in de novo pyrimidine nucleotide biosynthesis. Has preference for UMP and CMP as phosphate acceptors. Also displays broad nucleoside diphosphate kinase activity. This is UMP-CMP kinase (cmpk) from Danio rerio (Zebrafish).